We begin with the raw amino-acid sequence, 411 residues long: Squalene synthase (411 aa).

The NADP(+) site is built by Arg49 and Arg74. Mg(2+)-binding residues include Asp77, Glu80, and Asp81. Positions 212, 312, and 314 each coordinate NADP(+). The chain crosses the membrane as a helical span at residues 388 to 408 (SPVLIVVIFIILAIILAQLFG).

The protein belongs to the phytoene/squalene synthase family. Mg(2+) serves as cofactor.

It is found in the membrane. It carries out the reaction 2 (2E,6E)-farnesyl diphosphate + NADH + H(+) = squalene + 2 diphosphate + NAD(+). The enzyme catalyses 2 (2E,6E)-farnesyl diphosphate + NADPH + H(+) = squalene + 2 diphosphate + NADP(+). Functionally, converts farnesyl diphosphate (FPP) into squalene, a precursor for sterol biosynthesis in eukaryotes. This Solanum lycopersicum (Tomato) protein is Squalene synthase.